We begin with the raw amino-acid sequence, 352 residues long: Lipid storage droplets surface-binding protein 2 (352 aa).

Disordered stretches follow at residues 1-28 (MASA…DQPK) and 298-352 (NVEQ…VSSQ). Over residues 298–309 (NVEQSGGSSSDA) the composition is skewed to polar residues. Low complexity predominate over residues 315–329 (TTTSTTTTTTTSSTS).

Belongs to the perilipin family. As to expression, ubiquitous expression in early embryos. At stage 5 expression is restricted to the pole cells. At stage 11 expression is seen in the amnioserosa, refined to the fat body and midgut by stage 14. Also seen in the hindgut by the end of embryogenesis. Expression is seen in larval fat body (at protein level).

The protein resides in the cytoplasm. It is found in the lipid droplet. Essential for embryogenesis. Required for normal deposition of neutral lipids in the oocyte. The sequence is that of Lipid storage droplets surface-binding protein 2 from Drosophila melanogaster (Fruit fly).